Reading from the N-terminus, the 705-residue chain is Tetratricopeptide repeat protein 12 (705 aa).

Position 71 is a phosphothreonine (Thr71). 3 TPR repeats span residues 106-139 (ADAL…LKDM), 140-173 (KVLY…DEKC), and 174-207 (TKAY…NPKL).

Expressed in testis and in epithelial cells of trachea and bronchial tube.

Its subcellular location is the cytoplasm. Functionally, cytoplasmic protein that plays a role in the proper assembly of dynein arm complexes in motile cilia in both respiratory cells and sperm flagella. This chain is Tetratricopeptide repeat protein 12 (TTC12), found in Homo sapiens (Human).